The primary structure comprises 276 residues: MLMITSFANPRVAQAFVDYMATQGVILTIQQHNQSDIWLADESQAERVRVELARFIENPGDPRYLAASWQSGQTNSGLRYRRFPFLATLRERAGPVTWIVMIACVLVYIAMSLIGDQTVMVWLAWPFDPVLKFEVWRYFTHIFMHFSLMHILFNLLWWWYLGGAVEKRLGSGKLIVITVVSALLSGYVQQKFSGPWFGGLSGVVYALMGYVWLRGERDPQSGIYLQRGLIIFALLWIVAGWFDWFGMSMANGAHIAGLIVGLAMAFVDTLNARKRT.

The next 6 helical transmembrane spans lie at 94–114 (GPVT…MSLI), 142–162 (IFMH…WYLG), 169–189 (LGSG…GYVQ), 192–212 (FSGP…GYVW), 229–249 (LIIF…GMSM), and 250–270 (ANGA…VDTL). The active-site Nucleophile is the Ser201. His254 is a catalytic residue.

It belongs to the peptidase S54 family.

Its subcellular location is the cell inner membrane. The enzyme catalyses Cleaves type-1 transmembrane domains using a catalytic dyad composed of serine and histidine that are contributed by different transmembrane domains.. In terms of biological role, rhomboid-type serine protease that catalyzes intramembrane proteolysis. The polypeptide is Rhomboid protease GlpG (Salmonella choleraesuis (strain SC-B67)).